The following is a 279-amino-acid chain: Large ribosomal subunit protein uL2 (279 aa).

Disordered regions lie at residues serine 32 to histidine 53 and alanine 225 to lysine 279. A compositionally biased stretch (basic and acidic residues) spans lysine 253 to isoleucine 268. Residues valine 269 to lysine 279 show a composition bias toward basic residues.

The protein belongs to the universal ribosomal protein uL2 family. Part of the 50S ribosomal subunit. Forms a bridge to the 30S subunit in the 70S ribosome.

In terms of biological role, one of the primary rRNA binding proteins. Required for association of the 30S and 50S subunits to form the 70S ribosome, for tRNA binding and peptide bond formation. It has been suggested to have peptidyltransferase activity; this is somewhat controversial. Makes several contacts with the 16S rRNA in the 70S ribosome. The sequence is that of Large ribosomal subunit protein uL2 from Clavibacter michiganensis subsp. michiganensis (strain NCPPB 382).